The chain runs to 1343 residues: DNA-directed RNA polymerase subunit beta (1343 aa).

It belongs to the RNA polymerase beta chain family. As to quaternary structure, the RNAP catalytic core consists of 2 alpha, 1 beta, 1 beta' and 1 omega subunit. When a sigma factor is associated with the core the holoenzyme is formed, which can initiate transcription.

It catalyses the reaction RNA(n) + a ribonucleoside 5'-triphosphate = RNA(n+1) + diphosphate. Functionally, DNA-dependent RNA polymerase catalyzes the transcription of DNA into RNA using the four ribonucleoside triphosphates as substrates. The polypeptide is DNA-directed RNA polymerase subunit beta (Shewanella loihica (strain ATCC BAA-1088 / PV-4)).